A 564-amino-acid polypeptide reads, in one-letter code: uncharacterized protein (564 aa).

Residues 1 to 21 form the signal peptide; sequence MRRIGAITALSLPVLLSLLYS. Residue Cys22 is the site of N-palmitoyl cysteine attachment. A lipid anchor (S-diacylglycerol cysteine) is attached at Cys22.

Its subcellular location is the cell membrane. This is an uncharacterized protein from Aquifex aeolicus (strain VF5).